The chain runs to 500 residues: Glucokinase-1 (500 aa).

An N-acetylserine modification is found at S2. S2 is subject to Phosphoserine. The 487-residue stretch at 12-498 folds into the Hexokinase domain; the sequence is RAVIQAVDQI…SGVGAALCAL (487 aa). The interval 74-216 is hexokinase small subdomain; the sequence is NGTERGVLLA…MPMIKVVALT (143 aa). K110 contributes to the ATP binding site. The segment at 158 to 184 is glucose-binding; it reads KLGFTFSYPVDQTSLNSGTLIRWTKGF. Positions 217-487 are hexokinase large subdomain; the sequence is NDTVGTYLSH…RKVHLKIAKD (271 aa). Phosphoserine is present on S470. Residue 487–492 participates in ATP binding; that stretch reads DGSGVG.

Belongs to the hexokinase family. In terms of assembly, monomer.

It carries out the reaction D-glucose + ATP = D-glucose 6-phosphate + ADP + H(+). It functions in the pathway carbohydrate metabolism; hexose metabolism. The protein operates within carbohydrate degradation; glycolysis; D-glyceraldehyde 3-phosphate and glycerone phosphate from D-glucose: step 1/4. In terms of biological role, two isoenzymes, hexokinase-1 and hexokinase-2, can phosphorylate keto- and aldohexoses in yeast, whereas a third isoenzyme, GLK, is specific for aldohexoses. All glucose phosphorylating enzymes are involved in glucose uptake. The polypeptide is Glucokinase-1 (GLK1) (Saccharomyces cerevisiae (strain ATCC 204508 / S288c) (Baker's yeast)).